A 63-amino-acid polypeptide reads, in one-letter code: Jingdongin-1-MT1 (63 aa).

Positions 1 to 22 (MFTLKKSLLLLFFLGTINLSLC) are cleaved as a signal peptide. A propeptide spans 23 to 44 (EQERDADEEERRDDDEMDVEVE) (removed in mature form). An intrachain disulfide couples Cys-57 to Cys-63.

The protein belongs to the frog skin active peptide (FSAP) family. Brevinin subfamily. As to expression, expressed by the skin glands.

Its subcellular location is the secreted. Functionally, antimicrobial peptide. Active against some Gram-negative and a variety of Gram-positive bacterial strains. Active against fungus C.glabrata 090902 but not against C.neoformans 201211. Shows hemolytic activity against human erythrocytes. This chain is Jingdongin-1-MT1, found in Amolops mantzorum (Sichuan torrent frog).